Reading from the N-terminus, the 367-residue chain is MRWLLPWTLAAVAVLMVGNILATALSPTPTTMTFTPAPLEETITRPEFCKWPCECPQAPPRCPLGVSLITDGCECCKICAQQLGDNCTEAAVCDPHRGLYCDYSGDRPRYAIGVCAQVVGVGCVLDGVRYTNGESFQPNCRYNCTCIDGTVGCTPLCLSPRPPRLWCRQPRHVRVPGQCCEQWVCDDDARRPRQTALLDTRAFAASGAVEQRYENCIAYTSPWSPCSTTCGLGISTRISNVNARCWPEQESRLCNLRPCDVDIRPHIKAGKKCLAVYQPEEATNFTLAGCVSTRTYRPKYCGVCTDNRCCIPYKSKTISVDFQCPEGPGFSRQVLWINACFCNLSCRNPNDIFADLESYPDFAEIAN.

The first 22 residues, 1 to 22, serve as a signal peptide directing secretion; that stretch reads MRWLLPWTLAAVAVLMVGNILA. One can recognise an IGFBP N-terminal domain in the interval 45 to 118; the sequence is RPEFCKWPCE…RYAIGVCAQV (74 aa). 4 disulfide bridges follow: C49-C73, C53-C75, C55-C76, and C62-C79. Residue N86 is glycosylated (N-linked (GlcNAc...) asparagine). Disulfide bonds link C87/C101 and C93/C115. The region spanning 121-186 is the VWFC domain; it reads VGCVLDGVRY…GQCCEQWVCD (66 aa). A glycan (N-linked (GlcNAc...) asparagine) is linked at N143. The TSP type-1 domain maps to 215-260; sequence NCIAYTSPWSPCSTTCGLGISTRISNVNARCWPEQESRLCNLRPCD. 5 disulfides stabilise this stretch: C273–C310, C290–C324, C301–C340, C304–C342, and C309–C346. One can recognise a CTCK domain in the interval 273 to 347; that stretch reads CLAVYQPEEA…NACFCNLSCR (75 aa). Residue N284 is glycosylated (N-linked (GlcNAc...) asparagine). Residue N343 is glycosylated (N-linked (GlcNAc...) asparagine).

It belongs to the CCN family.

It is found in the secreted. Its function is as follows. Downstream regulator in the Wnt/Frizzled-signaling pathway. Associated with cell survival. Adheres to skin and melanoma fibroblasts. In vitro binding to skin fibroblasts occurs through the proteoglycans, decorin and biglycan. This chain is CCN family member 4 (Ccn4), found in Rattus norvegicus (Rat).